Here is a 130-residue protein sequence, read N- to C-terminus: EG45-like domain containing protein 2 (130 aa).

The signal sequence occupies residues 1–25 (MIKMAVKFVVVMIVFAQILAPIAEA). The 103-residue stretch at 28 to 130 (GKAVYYDPPY…GNIRVVYTPI (103 aa)) folds into the Expansin-like EG45 domain. N-linked (GlcNAc...) asparagine glycosylation occurs at asparagine 106.

As to expression, expressed in unstressed leaves.

The protein resides in the secreted. Functionally, plays a systemic role in water and solute homeostasis. The chain is EG45-like domain containing protein 2 (EGC2) from Arabidopsis thaliana (Mouse-ear cress).